The chain runs to 422 residues: Probable zinc-type alcohol dehydrogenase-like protein L498 (422 aa).

Zn(2+) contacts are provided by cysteine 108, histidine 129, cysteine 160, cysteine 163, cysteine 166, cysteine 174, and cysteine 231.

Requires Zn(2+) as cofactor.

The protein resides in the host cytoplasm. It is found in the virion. This chain is Probable zinc-type alcohol dehydrogenase-like protein L498, found in Acanthamoeba polyphaga (Amoeba).